A 139-amino-acid chain; its full sequence is Interleukin-5 (139 aa).

Residues 1 to 19 (MMKILVCLPLLTLYAGCVY) form the signal peptide. Residues N48, N77, and N91 are each glycosylated (N-linked (GlcNAc...) asparagine).

This sequence belongs to the IL-5 family. Homodimer; disulfide-linked. Interacts with IL5RA. Interacts with CSF2RB.

It localises to the secreted. Its function is as follows. Homodimeric cytokine expressed predominantly by T-lymphocytes and NK cells that plays an important role in the survival, differentiation, and chemotaxis of eosinophils. Also acts on activated and resting B-cells to induce immunoglobulin production, growth, and differentiation. Mechanistically, exerts its biological effects through a receptor composed of IL5RA subunit and the cytokine receptor common subunit beta/CSF2RB. Binding to the receptor leads to activation of various kinases including LYN, SYK and JAK2 and thereby propagates signals through the RAS-MAPK and JAK-STAT5 pathways respectively. The chain is Interleukin-5 (IL5) from Notamacropus eugenii (Tammar wallaby).